We begin with the raw amino-acid sequence, 324 residues long: MDLQKIKNQILDGRNLCIEDAYELENAPLNELLEAANEVRAKFCGNYFNFCSIINVKSGKCSENCKYCAQSAHFDTKCEIYDILPFEKIMPLAKLNDDAGVARFSLVASGKGLHKKDDLQKVIEIYKKLKSHTKFHLCASFGIVSKEILAELKKSGVKTYHHNLETSRKFFPKICTTHTYDDRINTIKSALCVGLDVCSGGIFGLGESLKDRIDMAYELKNLKVSSVPINILTPIKGTPLENSAPLCVDEILRSIAIFRLILPHVFLRLAGGRNNLKNSVKTALNGGINSAITGDFLTTCGDVAQSDKNLVSECGFVYKKSFDV.

A Radical SAM core domain is found at 43–273 (FCGNYFNFCS…HVFLRLAGGR (231 aa)). Cysteine 61, cysteine 65, and cysteine 68 together coordinate [4Fe-4S] cluster. [2Fe-2S] cluster-binding residues include serine 105, cysteine 138, cysteine 198, and arginine 268.

It belongs to the radical SAM superfamily. Biotin synthase family. In terms of assembly, homodimer. [4Fe-4S] cluster serves as cofactor. It depends on [2Fe-2S] cluster as a cofactor.

It catalyses the reaction (4R,5S)-dethiobiotin + (sulfur carrier)-SH + 2 reduced [2Fe-2S]-[ferredoxin] + 2 S-adenosyl-L-methionine = (sulfur carrier)-H + biotin + 2 5'-deoxyadenosine + 2 L-methionine + 2 oxidized [2Fe-2S]-[ferredoxin]. It participates in cofactor biosynthesis; biotin biosynthesis; biotin from 7,8-diaminononanoate: step 2/2. Functionally, catalyzes the conversion of dethiobiotin (DTB) to biotin by the insertion of a sulfur atom into dethiobiotin via a radical-based mechanism. The protein is Biotin synthase of Campylobacter hominis (strain ATCC BAA-381 / DSM 21671 / CCUG 45161 / LMG 19568 / NCTC 13146 / CH001A).